A 220-amino-acid chain; its full sequence is Tumor protein D54 (220 aa).

Met1 carries the N-acetylmethionine modification. Residues Ser3, Ser12, and Ser19 each carry the phosphoserine modification. A coiled-coil region spans residues 40–82; the sequence is GLTEGEEEELRAELAKVEEEIVTLRQVLAAKERHCGELKRRLG. A phosphoserine mark is found at Ser96, Ser149, Ser168, and Ser175. The residue at position 177 (Thr177) is a Phosphothreonine. Position 180 is a phosphoserine (Ser180). Thr187 bears the Phosphothreonine mark. The interval 189–220 is disordered; that stretch reads KSKVVGGRENGSDNLPPSPGSGDQTLPDHAPF. A phosphoserine mark is found at Ser206 and Ser209.

The protein belongs to the TPD52 family. In terms of assembly, forms a homodimer or heterodimer with other members of the family. Interacts with MAL2.

This chain is Tumor protein D54 (Tpd52l2), found in Mus musculus (Mouse).